The chain runs to 510 residues: Glutamyl-tRNA(Gln) amidotransferase subunit A (510 aa).

Catalysis depends on charge relay system residues lysine 82 and serine 157. The active-site Acyl-ester intermediate is the serine 181.

This sequence belongs to the amidase family. GatA subfamily. Heterotrimer of A, B and C subunits.

The catalysed reaction is L-glutamyl-tRNA(Gln) + L-glutamine + ATP + H2O = L-glutaminyl-tRNA(Gln) + L-glutamate + ADP + phosphate + H(+). Its function is as follows. Allows the formation of correctly charged Gln-tRNA(Gln) through the transamidation of misacylated Glu-tRNA(Gln) in organisms which lack glutaminyl-tRNA synthetase. The reaction takes place in the presence of glutamine and ATP through an activated gamma-phospho-Glu-tRNA(Gln). This chain is Glutamyl-tRNA(Gln) amidotransferase subunit A, found in Bordetella avium (strain 197N).